A 553-amino-acid chain; its full sequence is Terpene synthase 16 (553 aa).

Asp-303, Asp-307, and Glu-457 together coordinate Mg(2+). A DDXXD motif motif is present at residues 303–307 (DDTYD).

Belongs to the terpene synthase family. Tpsa subfamily. Requires Mg(2+) as cofactor. The cofactor is Mn(2+). In terms of tissue distribution, expressed in leaves, trichomes and flowers.

It participates in secondary metabolite biosynthesis; terpenoid biosynthesis. In terms of biological role, sesquiterpene synthase involved in the biosynthesis of volatile compounds. No activity detected with geranyl diphosphate (GPP) and farnesyl diphosphate (FPP) as substrates. The polypeptide is Terpene synthase 16 (Solanum lycopersicum (Tomato)).